Here is a 121-residue protein sequence, read N- to C-terminus: Large ribosomal subunit protein bL12 (121 aa).

The protein belongs to the bacterial ribosomal protein bL12 family. Homodimer. Part of the ribosomal stalk of the 50S ribosomal subunit. Forms a multimeric L10(L12)X complex, where L10 forms an elongated spine to which 2 to 4 L12 dimers bind in a sequential fashion. Binds GTP-bound translation factors.

Its function is as follows. Forms part of the ribosomal stalk which helps the ribosome interact with GTP-bound translation factors. Is thus essential for accurate translation. This is Large ribosomal subunit protein bL12 from Clostridium novyi (strain NT).